The sequence spans 193 residues: Peptidyl-tRNA hydrolase (193 aa).

Tyr17 contacts tRNA. The active-site Proton acceptor is His22. 3 residues coordinate tRNA: Phe68, Asn70, and Asn115.

It belongs to the PTH family. Monomer.

It localises to the cytoplasm. It carries out the reaction an N-acyl-L-alpha-aminoacyl-tRNA + H2O = an N-acyl-L-amino acid + a tRNA + H(+). Hydrolyzes ribosome-free peptidyl-tRNAs (with 1 or more amino acids incorporated), which drop off the ribosome during protein synthesis, or as a result of ribosome stalling. Its function is as follows. Catalyzes the release of premature peptidyl moieties from peptidyl-tRNA molecules trapped in stalled 50S ribosomal subunits, and thus maintains levels of free tRNAs and 50S ribosomes. The chain is Peptidyl-tRNA hydrolase from Alteromonas mediterranea (strain DSM 17117 / CIP 110805 / LMG 28347 / Deep ecotype).